The chain runs to 156 residues: Small ribosomal subunit protein uS7 (156 aa).

Belongs to the universal ribosomal protein uS7 family. As to quaternary structure, part of the 30S ribosomal subunit. Contacts proteins S9 and S11.

Its function is as follows. One of the primary rRNA binding proteins, it binds directly to 16S rRNA where it nucleates assembly of the head domain of the 30S subunit. Is located at the subunit interface close to the decoding center, probably blocks exit of the E-site tRNA. This Lachnospira eligens (strain ATCC 27750 / DSM 3376 / VPI C15-48 / C15-B4) (Eubacterium eligens) protein is Small ribosomal subunit protein uS7.